A 405-amino-acid polypeptide reads, in one-letter code: Glucose-1-phosphate adenylyltransferase (405 aa).

Alpha-D-glucose 1-phosphate is bound by residues glycine 164, 179 to 180 (EK), and serine 197.

The protein belongs to the bacterial/plant glucose-1-phosphate adenylyltransferase family. Homotetramer.

The catalysed reaction is alpha-D-glucose 1-phosphate + ATP + H(+) = ADP-alpha-D-glucose + diphosphate. It functions in the pathway glycan biosynthesis; glycogen biosynthesis. In terms of biological role, involved in the biosynthesis of ADP-glucose, a building block required for the elongation reactions to produce glycogen. Catalyzes the reaction between ATP and alpha-D-glucose 1-phosphate (G1P) to produce pyrophosphate and ADP-Glc. This is Glucose-1-phosphate adenylyltransferase from Corynebacterium jeikeium (strain K411).